The primary structure comprises 552 residues: Rhodopsin kinase GRK7 (552 aa).

A Phosphoserine; by PKA modification is found at serine 36. One can recognise an RGS domain in the interval 56 to 176 (FHSLCEQQPI…LASPFYDKFL (121 aa)). Residues 191–454 (FEEFRVLGKG…SDDPRKHHFF (264 aa)) form the Protein kinase domain. ATP contacts are provided by residues 197 to 205 (LGKGGFGEV) and lysine 220. The active-site Proton acceptor is the aspartate 316. Positions 455 to 520 (KTINFPRLEA…GAVPIAWQEE (66 aa)) constitute an AGC-kinase C-terminal domain. At cysteine 549 the chain carries Cysteine methyl ester. Cysteine 549 carries S-geranylgeranyl cysteine lipidation. The propeptide at 550 to 552 (LLL) is removed in mature form.

The protein belongs to the protein kinase superfamily. AGC Ser/Thr protein kinase family. GPRK subfamily. In terms of assembly, interacts (when prenylated) with PDE6D; this promotes release from membranes. In terms of processing, autophosphorylated in vitro at Ser-490. Phosphorylation at Ser-36 is regulated by light and activated by cAMP.

It localises to the membrane. It carries out the reaction L-threonyl-[rhodopsin] + ATP = O-phospho-L-threonyl-[rhodopsin] + ADP + H(+). The enzyme catalyses L-seryl-[rhodopsin] + ATP = O-phospho-L-seryl-[rhodopsin] + ADP + H(+). With respect to regulation, inhibited by phosphorylation of Ser-36. Retina-specific kinase involved in the shutoff of the photoresponse and adaptation to changing light conditions via cone opsin phosphorylation, including rhodopsin (RHO). This Bos taurus (Bovine) protein is Rhodopsin kinase GRK7 (GRK7).